A 590-amino-acid chain; its full sequence is Keratin, type II cytoskeletal 5 (590 aa).

Over residues 1-18 (MSRQSSVSFRSGGSRSFS) the composition is skewed to low complexity. Residues 1–20 (MSRQSSVSFRSGGSRSFSTA) are disordered. The head stretch occupies residues 1–167 (MSRQSSVSFR…DPSIQRVRTE (167 aa)). 4 positions are modified to phosphoserine: S5, S8, S16, and S21. The residue at position 24 (T24) is a Phosphothreonine; by CDK1. Residues S26, S36, S50, S64, S71, S75, and S82 each carry the phosphoserine modification. T151 carries the phosphothreonine; by CDK1 modification. Positions 168–203 (EREQIKTLNNKFASFIDKVRFLEQQNKVLDTKWTLL) are coil 1A. In terms of domain architecture, IF rod spans 168 to 481 (EREQIKTLNN…KLLEGEECRL (314 aa)). Residues 204-222 (QEQGTKTVRQNLEPLFEQY) form a linker 1 region. The tract at residues 223–315 (INNLRRQLDS…FFDAELSQMQ (93 aa)) is coil 1B. The linker 12 stretch occupies residues 316–338 (THVSDTSVVLSMDNNRNLDLDSI). The segment at 339 to 477 (IAEVKAQYEE…ATYRKLLEGE (139 aa)) is coil 2. The tail stretch occupies residues 478 to 590 (ECRLSGEGVG…TSSSRKSFKS (113 aa)). The disordered stretch occupies residues 566–590 (GSGGGSSSSVKFVSTTSSSRKSFKS). Low complexity predominate over residues 572-590 (SSSVKFVSTTSSSRKSFKS).

This sequence belongs to the intermediate filament family. Heterodimer of a type I and a type II keratin. Heterodimer with type I keratin KRT25 leading to the formation of keratin intermediate filament (KIF) network. Forms a heterodimer (via 2B domains) with KRT14 (via 2B domains). Interacts with PLEC isoform 1C, when in a heterodimer with KRT14. Interacts with TCHP. Interacts with EPPK1. Interacts with AMELX. Interacts with PKP1 (via N-terminus) and PKP2. In terms of processing, phosphorylated by CDK1, AURKB and Rho-kinase, phosphorylation is regulated by the cell cycle. Thr-24 phosphorylation, mediated by CDK1, peaks during prometaphase or metaphase cells with phosphorylated filamentous structures evident throughout the cytoplasm during early mitosis. CDK1 phosphorylates Thr-24 in mitotic cells at the site of injury. Post-translationally, O-glycosylated. Expressed in corneal epithelium (at protein level). Expressed in keratinocytes (at protein level).

It localises to the cytoplasm. Required for the formation of keratin intermediate filaments in the basal epidermis and maintenance of the skin barrier in response to mechanical stress. Regulates the recruitment of Langerhans cells to the epidermis, potentially by modulation of the abundance of macrophage chemotactic cytokines, macrophage inflammatory cytokines and CTNND1 localization in keratinocytes. This Homo sapiens (Human) protein is Keratin, type II cytoskeletal 5 (KRT5).